A 174-amino-acid chain; its full sequence is Ribosome maturation factor RimM (174 aa).

The 74-residue stretch at 101–174 folds into the PRC barrel domain; it reads AGEFYLADLC…IELLQRWILE (74 aa).

Belongs to the RimM family. As to quaternary structure, binds ribosomal protein uS19.

The protein resides in the cytoplasm. Functionally, an accessory protein needed during the final step in the assembly of 30S ribosomal subunit, possibly for assembly of the head region. Essential for efficient processing of 16S rRNA. May be needed both before and after RbfA during the maturation of 16S rRNA. It has affinity for free ribosomal 30S subunits but not for 70S ribosomes. In Treponema pallidum (strain Nichols), this protein is Ribosome maturation factor RimM.